A 522-amino-acid chain; its full sequence is Protein disulfide-isomerase (522 aa).

The or 22 signal peptide spans 1 to 28 (MKFSAGAVLSWSSLLLASSVFAQQEAVA). The Thioredoxin 1 domain occupies 29 to 141 (PEDSAVVKLA…VQFMIKQSQP (113 aa)). Residues C61 and C64 each act as nucleophile in the active site. An intrachain disulfide couples C61 to C64. N-linked (GlcNAc...) asparagine glycans are attached at residues N82, N117, N155, and N174. The region spanning 356–485 (FLKGDASPIV…LFDFIKENGH (130 aa)) is the Thioredoxin 2 domain. Catalysis depends on nucleophile residues C406 and C409. Cysteines 406 and 409 form a disulfide. A glycan (N-linked (GlcNAc...) asparagine) is linked at N425. A disordered region spans residues 497–522 (AQEKAAEEADADAELADEEDAIHDEL). Residues 504 to 522 (EADADAELADEEDAIHDEL) are compositionally biased toward acidic residues. The Prevents secretion from ER motif lies at 519 to 522 (HDEL).

Belongs to the protein disulfide isomerase family. In terms of assembly, interacts with EPS1, KAR2 and MNL1. The N-terminus is blocked.

It localises to the endoplasmic reticulum lumen. It carries out the reaction Catalyzes the rearrangement of -S-S- bonds in proteins.. Protein disulfide isomerase of ER lumen required for formation of disulfide bonds in secretory and cell-surface proteins and which unscrambles non-native disulfide bonds. Forms a complex with MNL1 to process unfolded protein-bound Man8GlcNAc2 oligosaccharides to Man7GlcNAc2, promoting degradation in unfolded protein response. This Saccharomyces cerevisiae (strain ATCC 204508 / S288c) (Baker's yeast) protein is Protein disulfide-isomerase (PDI1).